A 136-amino-acid chain; its full sequence is Small ribosomal subunit protein uS8c (136 aa).

This sequence belongs to the universal ribosomal protein uS8 family. As to quaternary structure, part of the 30S ribosomal subunit.

The protein localises to the plastid. Its subcellular location is the chloroplast. Functionally, one of the primary rRNA binding proteins, it binds directly to 16S rRNA central domain where it helps coordinate assembly of the platform of the 30S subunit. The chain is Small ribosomal subunit protein uS8c (rps8) from Morus indica (Mulberry).